Reading from the N-terminus, the 1029-residue chain is Carbamoyl phosphate synthase large chain (1029 aa).

The carboxyphosphate synthetic domain stretch occupies residues Met-1 to Glu-402. ATP contacts are provided by Arg-129, Arg-169, Gly-175, Gly-176, Glu-208, Ile-210, Glu-215, Gly-241, Val-242, His-243, Gln-285, and Glu-299. Residues Gln-133–Val-328 form the ATP-grasp 1 domain. Mg(2+) contacts are provided by Gln-285, Glu-299, and Asn-301. Mn(2+) is bound by residues Gln-285, Glu-299, and Asn-301. An oligomerization domain region spans residues Ser-403 to Asp-544. Residues Glu-545–Lys-929 form a carbamoyl phosphate synthetic domain region. Positions Asn-671–Val-863 constitute an ATP-grasp 2 domain. Positions 707, 747, 749, 754, 779, 780, 781, 782, 822, and 834 each coordinate ATP. Residues Gln-822, Glu-834, and Asn-836 each contribute to the Mg(2+) site. 3 residues coordinate Mn(2+): Gln-822, Glu-834, and Asn-836. Residues Ser-930–Ala-1028 enclose the MGS-like domain. An allosteric domain region spans residues Ser-930 to Gly-1029.

This sequence belongs to the CarB family. In terms of assembly, composed of two chains; the small (or glutamine) chain promotes the hydrolysis of glutamine to ammonia, which is used by the large (or ammonia) chain to synthesize carbamoyl phosphate. Tetramer of heterodimers (alpha,beta)4. Requires Mg(2+) as cofactor. It depends on Mn(2+) as a cofactor.

It catalyses the reaction hydrogencarbonate + L-glutamine + 2 ATP + H2O = carbamoyl phosphate + L-glutamate + 2 ADP + phosphate + 2 H(+). It carries out the reaction hydrogencarbonate + NH4(+) + 2 ATP = carbamoyl phosphate + 2 ADP + phosphate + 2 H(+). It functions in the pathway amino-acid biosynthesis; L-arginine biosynthesis; carbamoyl phosphate from bicarbonate: step 1/1. Its pathway is pyrimidine metabolism; UMP biosynthesis via de novo pathway; (S)-dihydroorotate from bicarbonate: step 1/3. Its function is as follows. Large subunit of the glutamine-dependent carbamoyl phosphate synthetase (CPSase). CPSase catalyzes the formation of carbamoyl phosphate from the ammonia moiety of glutamine, carbonate, and phosphate donated by ATP, constituting the first step of 2 biosynthetic pathways, one leading to arginine and/or urea and the other to pyrimidine nucleotides. The large subunit (synthetase) binds the substrates ammonia (free or transferred from glutamine from the small subunit), hydrogencarbonate and ATP and carries out an ATP-coupled ligase reaction, activating hydrogencarbonate by forming carboxy phosphate which reacts with ammonia to form carbamoyl phosphate. This is Carbamoyl phosphate synthase large chain from Deinococcus deserti (strain DSM 17065 / CIP 109153 / LMG 22923 / VCD115).